Consider the following 174-residue polypeptide: Large ribosomal subunit protein uL10 (174 aa).

It belongs to the universal ribosomal protein uL10 family. Part of the ribosomal stalk of the 50S ribosomal subunit. The N-terminus interacts with L11 and the large rRNA to form the base of the stalk. The C-terminus forms an elongated spine to which L12 dimers bind in a sequential fashion forming a multimeric L10(L12)X complex.

Its function is as follows. Forms part of the ribosomal stalk, playing a central role in the interaction of the ribosome with GTP-bound translation factors. This is Large ribosomal subunit protein uL10 from Trichlorobacter lovleyi (strain ATCC BAA-1151 / DSM 17278 / SZ) (Geobacter lovleyi).